A 365-amino-acid chain; its full sequence is Aminomethyltransferase (365 aa).

This sequence belongs to the GcvT family. The glycine cleavage system is composed of four proteins: P, T, L and H.

It catalyses the reaction N(6)-[(R)-S(8)-aminomethyldihydrolipoyl]-L-lysyl-[protein] + (6S)-5,6,7,8-tetrahydrofolate = N(6)-[(R)-dihydrolipoyl]-L-lysyl-[protein] + (6R)-5,10-methylene-5,6,7,8-tetrahydrofolate + NH4(+). The glycine cleavage system catalyzes the degradation of glycine. This is Aminomethyltransferase from Chlorobium luteolum (strain DSM 273 / BCRC 81028 / 2530) (Pelodictyon luteolum).